The primary structure comprises 194 residues: Oligoribonuclease (194 aa).

The 164-residue stretch at 11–174 (LIWIDLEMTG…SDVRDSIDEL (164 aa)) folds into the Exonuclease domain. The active site involves Tyr132.

This sequence belongs to the oligoribonuclease family.

It localises to the cytoplasm. Its function is as follows. 3'-to-5' exoribonuclease specific for small oligoribonucleotides. This chain is Oligoribonuclease, found in Xanthomonas campestris pv. campestris (strain ATCC 33913 / DSM 3586 / NCPPB 528 / LMG 568 / P 25).